The chain runs to 333 residues: Adenosine deaminase (333 aa).

Zn(2+) contacts are provided by H12 and H14. Substrate-binding residues include H14, D16, and G170. H197 contributes to the Zn(2+) binding site. Residue E200 is the Proton donor of the active site. D278 provides a ligand contact to Zn(2+). D279 contributes to the substrate binding site.

It belongs to the metallo-dependent hydrolases superfamily. Adenosine and AMP deaminases family. Adenosine deaminase subfamily. Zn(2+) serves as cofactor.

The catalysed reaction is adenosine + H2O + H(+) = inosine + NH4(+). It catalyses the reaction 2'-deoxyadenosine + H2O + H(+) = 2'-deoxyinosine + NH4(+). In terms of biological role, catalyzes the hydrolytic deamination of adenosine and 2-deoxyadenosine. This is Adenosine deaminase from Escherichia coli O81 (strain ED1a).